Reading from the N-terminus, the 305-residue chain is Homoserine O-acetyltransferase (305 aa).

The active-site Acyl-thioester intermediate is the cysteine 142. Residues lysine 163 and serine 192 each contribute to the substrate site. Histidine 235 (proton acceptor) is an active-site residue. Residue glutamate 237 is part of the active site. Arginine 249 provides a ligand contact to substrate.

This sequence belongs to the MetA family.

It is found in the cytoplasm. It catalyses the reaction L-homoserine + acetyl-CoA = O-acetyl-L-homoserine + CoA. It participates in amino-acid biosynthesis; L-methionine biosynthesis via de novo pathway; O-acetyl-L-homoserine from L-homoserine: step 1/1. Functionally, transfers an acetyl group from acetyl-CoA to L-homoserine, forming acetyl-L-homoserine. This Acetivibrio thermocellus (strain ATCC 27405 / DSM 1237 / JCM 9322 / NBRC 103400 / NCIMB 10682 / NRRL B-4536 / VPI 7372) (Clostridium thermocellum) protein is Homoserine O-acetyltransferase.